A 338-amino-acid chain; its full sequence is 5-dehydro-2-deoxygluconokinase (338 aa).

It belongs to the carbohydrate kinase PfkB family.

It catalyses the reaction 5-dehydro-2-deoxy-D-gluconate + ATP = 6-phospho-5-dehydro-2-deoxy-D-gluconate + ADP + H(+). It participates in polyol metabolism; myo-inositol degradation into acetyl-CoA; acetyl-CoA from myo-inositol: step 5/7. Catalyzes the phosphorylation of 5-dehydro-2-deoxy-D-gluconate (2-deoxy-5-keto-D-gluconate or DKG) to 6-phospho-5-dehydro-2-deoxy-D-gluconate (DKGP). The protein is 5-dehydro-2-deoxygluconokinase of Mesomycoplasma hyopneumoniae (strain J / ATCC 25934 / NCTC 10110) (Mycoplasma hyopneumoniae).